A 1054-amino-acid chain; its full sequence is MAAVKEPLEFHAKRPWRPEEAVEDPDEEDEDNTSEAENGFSLEEVLRLGGTKQDYLMLATLDENEEVIDGGKKGAIDDLQQGELEAFIQNLNLAKYTKASLVEEDEPAEKENSSKKEVKIPKINNKNTAESQRTSVNKVKNKNRPEPHSDENGSTTPKVKKDKQNIFEFFERQTLLLRPGGKWYDLEYSNEYSLKPQPQDVVSKYKTLAQKLYQHEINLFKSKTNSQKGASSTWMKAIVSSGTLGDRMAAMILLIQDDAVHTLQFVETLVNLVKKKGSKQQCLMALDTFKELLITDLLPDNRKLRIFSQRPFDKLEQLSSGNKDSRDRRLILWYFEHQLKHLVAEFVQVLETLSHDTLVTTKTRALTVAHELLCNKPEEEKALLVQVVNKLGDPQNRIATKASHLLETLLCKHPNMKGVVSGEVERLLFRSNISSKAQYYAICFLNQMALSHEESELANKLITVYFCFFRTCVKKKDVESKMLSALLTGVNRAYPYSQTGDDKVREQIDTLFKVLHIVNFNTSVQALMLLFQVMNSQQTISDRYYTALYRKMLDPGLMTCSKQAMFLNLVYKSLKADIVLRRVKAFVKRLLQVTCQQMPPFICGALYLVSEILKAKPGLRSQLDDHPESDDEENFIDANDDEDMEKFTDADKETEIVKKLETEETVPETDVETKKPEVASWVHFDNLKGGKQLNKYDPFSRNPLFCGAENTSLWELKKLSVHFHPSVALFAKTILQGNYIQYSGDPLQDFTLMRFLDRFVYRNPKPHKGKENTDSVVMQPKRKHFIKDIRHLPVNSKEFLAKEESQIPVDEVFFHRYYKKVAVKEKQKRDADEESIEDVDDEEFEELIDTFEDDNCFSSGKDDMDFAGNVKKRTKGAKDNTLDEDSEGSDDELGNLDDDEVSLGSMDDEEFAEVDEDGGTFMDVLDDESESVPELEVHSKVSTKKSKRKGTDDFDFAGSFQGPRKKKRNLNDSSLFVSAEEFGHLLDENMGSKFDNIGMNAMANKDNASLKQLRWEAERDDWLHNRDAKSIIKKKKHFKKKRIKTTQKTKKQRK.

Residues 1–20 (MAAVKEPLEFHAKRPWRPEE) are compositionally biased toward basic and acidic residues. Disordered regions lie at residues 1–42 (MAAV…GFSL) and 102–160 (VEED…PKVK). The span at 21-34 (AVEDPDEEDEDNTS) shows a compositional bias: acidic residues. Basic and acidic residues predominate over residues 109–120 (EKENSSKKEVKI). Ser113 carries the phosphoserine modification. Residues 124-138 (NNKNTAESQRTSVNK) show a composition bias toward polar residues. A Phosphoserine modification is found at Ser629. Position 695 is an N6-acetyllysine (Lys695). Ser835 is modified (phosphoserine). Disordered regions lie at residues 873–902 (RTKG…DEVS) and 915–969 (DEDG…KKRN). 2 stretches are compositionally biased toward acidic residues: residues 882-902 (LDED…DEVS) and 915-933 (DEDG…ESVP). A phosphoserine mark is found at Ser959, Ser973, and Ser978. The tract at residues 1031–1054 (IIKKKKHFKKKRIKTTQKTKKQRK) is disordered.

It belongs to the CBF/MAK21 family.

It localises to the nucleus. In terms of biological role, stimulates transcription from the HSP70 promoter. This is CCAAT/enhancer-binding protein zeta (CEBPZ) from Homo sapiens (Human).